The chain runs to 559 residues: Putative helicase 22 (559 aa).

The Helicase ATP-binding domain maps to 186–347 (VSDVNVIGNG…EIMGLLGKIS (162 aa)). 199–206 (APTGSGKS) is a binding site for ATP. The DEAH box signature appears at 300–303 (DEAH). Residues 410 to 552 (TNKQIISKIK…KMNFIENEYN (143 aa)) form the Helicase C-terminal domain.

The chain is Putative helicase 22 (SIFV0022) from Sulfolobus islandicus filamentous virus (isolate Iceland/Hveragerdi) (SIFV).